The following is a 103-amino-acid chain: Co-chaperonin GroES (103 aa).

This sequence belongs to the GroES chaperonin family. As to quaternary structure, heptamer of 7 subunits arranged in a ring. Interacts with the chaperonin GroEL.

It is found in the cytoplasm. Its function is as follows. Together with the chaperonin GroEL, plays an essential role in assisting protein folding. The GroEL-GroES system forms a nano-cage that allows encapsulation of the non-native substrate proteins and provides a physical environment optimized to promote and accelerate protein folding. GroES binds to the apical surface of the GroEL ring, thereby capping the opening of the GroEL channel. This chain is Co-chaperonin GroES, found in Nostoc sp. (strain PCC 7120 / SAG 25.82 / UTEX 2576).